A 295-amino-acid chain; its full sequence is 4-diphosphocytidyl-2-C-methyl-D-erythritol kinase (295 aa).

Residue K22 is part of the active site. 106-116 provides a ligand contact to ATP; it reads PAGGGFGGGSS. D148 is a catalytic residue.

The protein belongs to the GHMP kinase family. IspE subfamily.

It catalyses the reaction 4-CDP-2-C-methyl-D-erythritol + ATP = 4-CDP-2-C-methyl-D-erythritol 2-phosphate + ADP + H(+). It functions in the pathway isoprenoid biosynthesis; isopentenyl diphosphate biosynthesis via DXP pathway; isopentenyl diphosphate from 1-deoxy-D-xylulose 5-phosphate: step 3/6. Catalyzes the phosphorylation of the position 2 hydroxy group of 4-diphosphocytidyl-2C-methyl-D-erythritol. This Xanthomonas axonopodis pv. citri (strain 306) protein is 4-diphosphocytidyl-2-C-methyl-D-erythritol kinase.